The following is a 338-amino-acid chain: Starch-binding domain-containing protein 1 (338 aa).

Over 1 to 6 (MGAVWS) the chain is Extracellular. A helical transmembrane segment spans residues 7 to 23 (ALLVGGGLAGALILWLL). Over 24–338 (RGDSGAPGKD…KVVHGWWGIH (315 aa)) the chain is Cytoplasmic. Disordered regions lie at residues 30–73 (PGKD…RELV) and 120–148 (KIPDTHSRADSEAARNQSPGSHGGEWRLP). Residues 36–52 (AEPPQKGAPPGEAAAPG) show a composition bias toward low complexity. Over residues 53–62 (DGPGGGGSGG) the composition is skewed to gly residues. Residue S68 is modified to Phosphoserine. The span at 122–132 (PDTHSRADSEA) shows a compositional bias: basic and acidic residues. S140, S167, and S179 each carry phosphoserine. An LIR motif is present at residues 185–191 (HEDWEVV). S195, S196, S205, S209, S212, S220, and S223 each carry phosphoserine. The CBM20 domain occupies 238–337 (SLKPQQVSIQ…DKVVHGWWGI (100 aa)).

In terms of assembly, interacts with the ATG8 family proteins GABARAP and GABARAPL1. Interacts with several glycogen-associated proteins, such as GYS2 (liver glycogen synthase), GDE (glycogen debranching enzyme), GBE1 (glycogen branching enzyme 1) and EPM2A (Laforin). Ubiquitinated, which leads to proteasomal degradation. In terms of tissue distribution, expressed at high level in glycogen-accumulating organs such as muscle and liver. Trace signals are also found in brain, kidney, and pancreas.

The protein resides in the preautophagosomal structure membrane. It localises to the endoplasmic reticulum membrane. It is found in the cell membrane. Its subcellular location is the sarcolemma. The protein localises to the T-tubule. Its function is as follows. Acts as a cargo receptor for glycogen. Delivers its cargo to an autophagic pathway called glycophagy, resulting in the transport of glycogen to lysosomes. This Mus musculus (Mouse) protein is Starch-binding domain-containing protein 1.